A 105-amino-acid polypeptide reads, in one-letter code: Urease subunit beta (105 aa).

The protein belongs to the urease beta subunit family. Heterotrimer of UreA (gamma), UreB (beta) and UreC (alpha) subunits. Three heterotrimers associate to form the active enzyme.

The protein resides in the cytoplasm. The catalysed reaction is urea + 2 H2O + H(+) = hydrogencarbonate + 2 NH4(+). The protein operates within nitrogen metabolism; urea degradation; CO(2) and NH(3) from urea (urease route): step 1/1. This is Urease subunit beta from Mycobacterium sp. (strain JLS).